Consider the following 89-residue polypeptide: Small ribosomal subunit protein bS16 (89 aa).

Belongs to the bacterial ribosomal protein bS16 family.

The protein is Small ribosomal subunit protein bS16 of Nitrosomonas europaea (strain ATCC 19718 / CIP 103999 / KCTC 2705 / NBRC 14298).